The chain runs to 121 residues: MTNGRKMEYKLVDSEKDIERSYEPRRKPKRSRIQLHDWQSMLLEHSFRMNPYPDRIEKYNLFLKTKIPMKNVKIWFQNRRAREKSFYEEAVEVHRDGRRAGHRSLGSRSALFAEEFQYRRY.

Residues 28 to 87 (PKRSRIQLHDWQSMLLEHSFRMNPYPDRIEKYNLFLKTKIPMKNVKIWFQNRRAREKSFY) constitute a DNA-binding region (homeobox).

The protein localises to the nucleus. In Encephalitozoon cuniculi (strain GB-M1) (Microsporidian parasite), this protein is Homeobox protein HD-6 (HD-6).